The sequence spans 277 residues: Large ribosomal subunit protein uL2 (277 aa).

2 disordered regions span residues 37 to 60 and 223 to 265; these read KNST…GHKH and VVMN…KRTD. The segment covering 39-49 has biased composition (polar residues); that stretch reads STAGRNNNGHI. Basic residues predominate over residues 50–60; sequence TTRHKGGGHKH. Residues 229–244 are compositionally biased toward basic and acidic residues; that stretch reads DHPHGGGEGRTGEARE.

This sequence belongs to the universal ribosomal protein uL2 family. Part of the 50S ribosomal subunit. Forms a bridge to the 30S subunit in the 70S ribosome.

In terms of biological role, one of the primary rRNA binding proteins. Required for association of the 30S and 50S subunits to form the 70S ribosome, for tRNA binding and peptide bond formation. It has been suggested to have peptidyltransferase activity; this is somewhat controversial. Makes several contacts with the 16S rRNA in the 70S ribosome. In Neisseria meningitidis serogroup A / serotype 4A (strain DSM 15465 / Z2491), this protein is Large ribosomal subunit protein uL2.